The sequence spans 400 residues: Exodeoxyribonuclease 7 large subunit (400 aa).

It belongs to the XseA family. As to quaternary structure, heterooligomer composed of large and small subunits.

It localises to the cytoplasm. The enzyme catalyses Exonucleolytic cleavage in either 5'- to 3'- or 3'- to 5'-direction to yield nucleoside 5'-phosphates.. Functionally, bidirectionally degrades single-stranded DNA into large acid-insoluble oligonucleotides, which are then degraded further into small acid-soluble oligonucleotides. The chain is Exodeoxyribonuclease 7 large subunit from Clostridium novyi (strain NT).